We begin with the raw amino-acid sequence, 110 residues long: Nucleoid-associated protein YE3092 (110 aa).

Belongs to the YbaB/EbfC family. Homodimer.

It localises to the cytoplasm. It is found in the nucleoid. Binds to DNA and alters its conformation. May be involved in regulation of gene expression, nucleoid organization and DNA protection. The polypeptide is Nucleoid-associated protein YE3092 (Yersinia enterocolitica serotype O:8 / biotype 1B (strain NCTC 13174 / 8081)).